A 473-amino-acid chain; its full sequence is GDP-fucose protein O-fucosyltransferase 2 (473 aa).

An N-terminal signal peptide occupies residues 1–25; it reads MKNMIYNLISISLYSLIIILTDIYA. GDP-beta-L-fucose is bound by residues 59–63, 283–285, and 379–380; these read GEGFN, HLR, and RF. E60 functions as the Proton acceptor in the catalytic mechanism.

The protein belongs to the glycosyltransferase 68 family.

Its subcellular location is the endoplasmic reticulum. It carries out the reaction L-seryl-[protein] + GDP-beta-L-fucose = 3-O-(alpha-L-fucosyl)-L-seryl-[protein] + GDP + H(+). The catalysed reaction is L-threonyl-[protein] + GDP-beta-L-fucose = 3-O-(alpha-L-fucosyl)-L-threonyl-[protein] + GDP + H(+). It participates in protein modification; protein glycosylation. In terms of biological role, catalyzes the reaction that attaches fucose through an O-glycosidic linkage to a conserved serine or threonine residue in the consensus sequence C1-X-X-S/T-C2 of thrombospondin type I repeats (TSRs) where C1 and C2 are the first and second cysteines of the repeat, respectively. O-fucosylates sporozoite proteins CSP and TRAP. O-fucosylation regulates stability and intracellular trafficking of TRAP but not of CSP. Dispensable for parasite transmission to the mosquito vector and/or infection of the vertebrate host hepatocytes. The sequence is that of GDP-fucose protein O-fucosyltransferase 2 from Plasmodium berghei (strain Anka).